Reading from the N-terminus, the 378-residue chain is Putative glutamate--cysteine ligase 2 (378 aa).

The protein belongs to the glutamate--cysteine ligase type 2 family. YbdK subfamily.

It carries out the reaction L-cysteine + L-glutamate + ATP = gamma-L-glutamyl-L-cysteine + ADP + phosphate + H(+). ATP-dependent carboxylate-amine ligase which exhibits weak glutamate--cysteine ligase activity. In Salinispora tropica (strain ATCC BAA-916 / DSM 44818 / JCM 13857 / NBRC 105044 / CNB-440), this protein is Putative glutamate--cysteine ligase 2.